A 142-amino-acid chain; its full sequence is ATP synthase epsilon chain (142 aa).

It belongs to the ATPase epsilon chain family. As to quaternary structure, F-type ATPases have 2 components, CF(1) - the catalytic core - and CF(0) - the membrane proton channel. CF(1) has five subunits: alpha(3), beta(3), gamma(1), delta(1), epsilon(1). CF(0) has three main subunits: a, b and c.

The protein resides in the cell inner membrane. Produces ATP from ADP in the presence of a proton gradient across the membrane. The polypeptide is ATP synthase epsilon chain (Shewanella piezotolerans (strain WP3 / JCM 13877)).